Here is a 295-residue protein sequence, read N- to C-terminus: METIIEEYLKFIQIEKGLSENTIGAYRRDLKKYQLYMQEQKIAHIDFIDRQTIQECLGSLIDQGASAKSIARFISTIRSFHQFALREKYAAKDPTVLIETPKYEKKLPDVLDVEEVIQLLETPDLTKNNGYRDRTILELLYATGMRVTELIQIEIDDVNLIMGFVKVFGKGNKERIIPLGDTVIEYLDTYINNVRSQLLKKTVTNVLFLNLHGRPLTRQGIWKLIKQYGLRANINKTLTPHTLRHSFATHLLENGADLRAVQEMLGHSDISTTQLYTHVSKTQIRQMYNQFHPRA.

Residues 1–85 (METIIEEYLK…TIRSFHQFAL (85 aa)) enclose the Core-binding (CB) domain. The Tyr recombinase domain occupies 106 to 289 (KLPDVLDVEE…SKTQIRQMYN (184 aa)). Catalysis depends on residues Arg-146, Lys-170, His-241, Arg-244, and His-267. Tyr-276 acts as the O-(3'-phospho-DNA)-tyrosine intermediate in catalysis.

The protein belongs to the 'phage' integrase family. XerD subfamily. As to quaternary structure, forms a cyclic heterotetrameric complex composed of two molecules of XerC and two molecules of XerD.

Its subcellular location is the cytoplasm. Functionally, site-specific tyrosine recombinase, which acts by catalyzing the cutting and rejoining of the recombining DNA molecules. The XerC-XerD complex is essential to convert dimers of the bacterial chromosome into monomers to permit their segregation at cell division. It also contributes to the segregational stability of plasmids. The polypeptide is Tyrosine recombinase XerD (Staphylococcus haemolyticus (strain JCSC1435)).